The following is a 530-amino-acid chain: Inactive ubiquitin carboxyl-terminal hydrolase 17-like protein 7 (530 aa).

The USP domain maps to 80-375 (AGLQKIGNTF…QAYVLFYIQK (296 aa)). The segment covering 382–392 (SESVSRGREPR) has biased composition (basic and acidic residues). Disordered stretches follow at residues 382-412 (SESV…KRDH), 431-454 (ESTL…NVRK), and 490-530 (SSTK…LVCQ). Residues 490–512 (SSTKPTDQESMNTGTLASLQGST) show a composition bias toward polar residues. The span at 513 to 524 (RRSKGNNKHSKR) shows a compositional bias: basic residues.

Belongs to the peptidase C19 family. USP17 subfamily.

The protein localises to the nucleus. It is found in the endoplasmic reticulum. The protein is Inactive ubiquitin carboxyl-terminal hydrolase 17-like protein 7 (USP17L7) of Homo sapiens (Human).